We begin with the raw amino-acid sequence, 178 residues long: Large ribosomal subunit protein bL19 (178 aa).

Belongs to the bacterial ribosomal protein bL19 family.

This protein is located at the 30S-50S ribosomal subunit interface and may play a role in the structure and function of the aminoacyl-tRNA binding site. The sequence is that of Large ribosomal subunit protein bL19 from Rhizobium etli (strain ATCC 51251 / DSM 11541 / JCM 21823 / NBRC 15573 / CFN 42).